The sequence spans 394 residues: Acid ceramidase (394 aa).

The signal sequence occupies residues 1–18; sequence MRGQSLLTWVLAAAVTCA. A disulfide bridge connects residues Cys-30 and Cys-339. Cys-142 (nucleophile) is an active-site residue. N-linked (GlcNAc...) asparagine glycans are attached at residues Asn-172, Asn-194, Asn-258, Asn-341, and Asn-347. Cysteines 387 and 391 form a disulfide.

The protein belongs to the acid ceramidase family. Heterodimer; disulfide-linked. The heterodimer is composed of the disulfide-linked alpha and beta chains produced by autocatalytic cleavage of the precursor. Post-translationally, N-glycosylated. In terms of processing, proteolytically cleaved into two chains alpha and beta that remain associated via a disulfide bond. Cleavage gives rise to a conformation change that activates the enzyme. The same catalytic Cys residue mediates the autoproteolytic cleavage and subsequent hydrolysis of lipid substrates. The beta chain may undergo an additional C-terminal processing. Widely expressed.

The protein resides in the lysosome. It localises to the secreted. The catalysed reaction is an N-acylsphing-4-enine + H2O = sphing-4-enine + a fatty acid. It carries out the reaction N-dodecanoylsphing-4-enine + H2O = dodecanoate + sphing-4-enine. It catalyses the reaction N-(9Z-octadecenoyl)-sphing-4-enine + H2O = sphing-4-enine + (9Z)-octadecenoate. The enzyme catalyses N-tetradecanoylsphing-4-enine + H2O = tetradecanoate + sphing-4-enine. The catalysed reaction is N-hexadecanoylsphing-4-enine + H2O = sphing-4-enine + hexadecanoate. It carries out the reaction N-octadecanoylsphing-4-enine + H2O = sphing-4-enine + octadecanoate. It catalyses the reaction N-dodecanoyl-(4R)-hydroxysphinganine + H2O = (4R)-hydroxysphinganine + dodecanoate. The enzyme catalyses N-(dodecanoyl)-sphinganine + H2O = dodecanoate + sphinganine. The catalysed reaction is N-(acetyl)-sphing-4-enine + H2O = sphing-4-enine + acetate. It carries out the reaction N-(hexanoyl)sphing-4-enine + H2O = hexanoate + sphing-4-enine. It catalyses the reaction N-octanoylsphing-4-enine + H2O = octanoate + sphing-4-enine. The enzyme catalyses N-dodecanoylethanolamine + H2O = dodecanoate + ethanolamine. Its pathway is lipid metabolism; sphingolipid metabolism. In terms of biological role, lysosomal ceramidase that hydrolyzes sphingolipid ceramides into sphingosine and free fatty acids at acidic pH. Ceramides, sphingosine, and its phosphorylated form sphingosine-1-phosphate are bioactive lipids that mediate cellular signaling pathways regulating several biological processes including cell proliferation, apoptosis and differentiation. Has a higher catalytic efficiency towards C12-ceramides versus other ceramides. Also catalyzes the reverse reaction allowing the synthesis of ceramides from fatty acids and sphingosine. For the reverse synthetic reaction, the natural sphingosine D-erythro isomer is more efficiently utilized as a substrate compared to D-erythro-dihydrosphingosine and D-erythro-phytosphingosine, while the fatty acids with chain lengths of 12 or 14 carbons are the most efficiently used. Also has an N-acylethanolamine hydrolase activity. By regulating the levels of ceramides, sphingosine and sphingosine-1-phosphate in the epidermis, mediates the calcium-induced differentiation of epidermal keratinocytes. Also indirectly regulates tumor necrosis factor/TNF-induced apoptosis. By regulating the intracellular balance between ceramides and sphingosine, in adrenocortical cells, probably also acts as a regulator of steroidogenesis. This chain is Acid ceramidase, found in Mus musculus (Mouse).